The following is a 467-amino-acid chain: Probable Xaa-Pro aminopeptidase pepP (467 aa).

Mn(2+) contacts are provided by Asp-264, Asp-275, Glu-398, and Glu-438.

Belongs to the peptidase M24B family. Mn(2+) serves as cofactor.

It catalyses the reaction Release of any N-terminal amino acid, including proline, that is linked to proline, even from a dipeptide or tripeptide.. Functionally, catalyzes the removal of a penultimate prolyl residue from the N-termini of peptides. The sequence is that of Probable Xaa-Pro aminopeptidase pepP (pepP) from Neosartorya fischeri (strain ATCC 1020 / DSM 3700 / CBS 544.65 / FGSC A1164 / JCM 1740 / NRRL 181 / WB 181) (Aspergillus fischerianus).